Consider the following 189-residue polypeptide: Small ribosomal subunit protein uS7 (189 aa).

It belongs to the universal ribosomal protein uS7 family. As to quaternary structure, part of the 30S ribosomal subunit.

Functionally, one of the primary rRNA binding proteins, it binds directly to 16S rRNA where it nucleates assembly of the head domain of the 30S subunit. Is located at the subunit interface close to the decoding center. This chain is Small ribosomal subunit protein uS7, found in Methanosarcina acetivorans (strain ATCC 35395 / DSM 2834 / JCM 12185 / C2A).